We begin with the raw amino-acid sequence, 505 residues long: Chemotaxis regulatory protein ChePep (505 aa).

Disordered regions lie at residues 154-403 (EPNN…EDIP) and 420-465 (EAVA…SSPL). Basic and acidic residues-rich tracts occupy residues 172 to 263 (EEVK…EKTQ), 289 to 311 (ENKE…EVVT), 337 to 346 (QAHELEKQEI), 359 to 373 (QDKE…KEET), and 386 to 398 (PQEK…HYES). Residues 440–451 (TETSKNENNTET) show a composition bias toward low complexity.

In terms of assembly, interacts with CheZ; the interaction is essential for each other polar localization.

It is found in the cytoplasm. Its function is as follows. Plays an essential role in chemotaxis. Regulates flagellar rotation through the formation of a complex with chemotaxis protein CheZ. Plays a major role in colonization of the stomach. In Helicobacter pylori (strain ATCC 700392 / 26695) (Campylobacter pylori), this protein is Chemotaxis regulatory protein ChePep.